The chain runs to 435 residues: 3-ketoacyl-CoA thiolase (435 aa).

C98 (acyl-thioester intermediate) is an active-site residue. Catalysis depends on proton acceptor residues H391 and C421.

Belongs to the thiolase-like superfamily. Thiolase family. As to quaternary structure, heterotetramer of two alpha chains (FadJ) and two beta chains (FadI).

It localises to the cytoplasm. The enzyme catalyses an acyl-CoA + acetyl-CoA = a 3-oxoacyl-CoA + CoA. It functions in the pathway lipid metabolism; fatty acid beta-oxidation. Its function is as follows. Catalyzes the final step of fatty acid oxidation in which acetyl-CoA is released and the CoA ester of a fatty acid two carbons shorter is formed. This chain is 3-ketoacyl-CoA thiolase, found in Colwellia psychrerythraea (strain 34H / ATCC BAA-681) (Vibrio psychroerythus).